A 347-amino-acid chain; its full sequence is Protein RecA (347 aa).

65-72 (GPESSGKT) contributes to the ATP binding site. Basic and acidic residues predominate over residues 327 to 336 (KFEPTELSRE). The interval 327-347 (KFEPTELSREEGDEDTLEDTM) is disordered. The segment covering 337–347 (EGDEDTLEDTM) has biased composition (acidic residues).

It belongs to the RecA family.

The protein localises to the cytoplasm. Its function is as follows. Can catalyze the hydrolysis of ATP in the presence of single-stranded DNA, the ATP-dependent uptake of single-stranded DNA by duplex DNA, and the ATP-dependent hybridization of homologous single-stranded DNAs. It interacts with LexA causing its activation and leading to its autocatalytic cleavage. In Xylella fastidiosa (strain 9a5c), this protein is Protein RecA.